Reading from the N-terminus, the 513-residue chain is MSGCLPCFGSSAKDAASKDSVKKELSAKDGSVTQSHHISLDKSKSRRGPEQKKELTAPKEGPTAHIAAQTFTFRELAAATKNFRPECLLGEGGFGRVYKGRLETTGQIVAVKQLDRNGLQGNREFLVEVLMLSLLHHPNLVNLIGYCADGDQRLLVYEYMPLGSLEDHLHDLPPDKEPLDWSTRMTIAAGAAKGLEYLHDKANPPVIYRDLKSSNILLGDGYHPKLSDFGLAKLGPVGDKTHVSTRVMGTYGYCAPEYAMTGQLTLKSDVYSFGVVFLELITGRKAIDNARAPGEHNLVAWARPLFKDRRKFPKMADPSLQGRYPMRGLYQALAVAAMCLQEQAATRPLIGDVVTALTYLASQTFDPNAPSGQNSRSGSGPPFIRTRDDRRSLGDGSSLDSPAETRSRLGSPATHKNSPDYRRRDMVREVNAGSEGGSETGGGSGRKWGLSDLEGQESQRGSPASVGRSSRGTPRNRDLDRERAVAEAKVWGENWRERKRATNGPGSFDSTND.

The segment at 1–61 (MSGCLPCFGS…KKELTAPKEG (61 aa)) is disordered. Residues Cys4 and Cys7 are each lipidated (S-palmitoyl cysteine). Basic and acidic residues-rich tracts occupy residues 15–27 (AASKDSVKKELSA) and 38–57 (ISLDKSKSRRGPEQKKELTA). Residues 83–360 (FRPECLLGEG…GDVVTALTYL (278 aa)) enclose the Protein kinase domain. ATP contacts are provided by residues 89–97 (LGEGGFGRV) and Lys112. The active-site Proton acceptor is the Asp210. A Phosphoserine; by CERK1 modification is found at Ser244. Phosphothreonine; by CERK1 occurs at positions 245 and 250. A compositionally biased stretch (polar residues) spans 365–378 (FDPNAPSGQNSRSG). The segment at 365–513 (FDPNAPSGQN…GPGSFDSTND (149 aa)) is disordered. A phosphoserine mark is found at Ser392 and Ser401. Over residues 417 to 428 (NSPDYRRRDMVR) the composition is skewed to basic and acidic residues. Over residues 434-446 (SEGGSETGGGSGR) the composition is skewed to gly residues. A compositionally biased stretch (polar residues) spans 456 to 473 (QESQRGSPASVGRSSRGT). Residues 475–486 (RNRDLDRERAVA) are compositionally biased toward basic and acidic residues. Over residues 504-513 (GPGSFDSTND) the composition is skewed to polar residues.

Belongs to the protein kinase superfamily. Ser/Thr protein kinase family. As to quaternary structure, interacts with CERK1 (preferentially unphosphorylated) at the plasma membrane. Binds to MAPKKK5 at the plasma membrane; disassociation is induced by chitin perception by the CERK1 complex. Also associates with MAPKKK3. In terms of processing, phosphorylated by CERK1 upon elicitation by chitin. Palmitoylation at Cys-4 and Cys-7 are required for plasma membrane location.

The protein resides in the cell membrane. The catalysed reaction is L-seryl-[protein] + ATP = O-phospho-L-seryl-[protein] + ADP + H(+). The enzyme catalyses L-threonyl-[protein] + ATP = O-phospho-L-threonyl-[protein] + ADP + H(+). In terms of biological role, receptor-like cytoplasmic kinase involved in the transduction of signal between the host cell surface chitin receptor complex CERK1-LYK5 and the intracellular MAPKKK5-dependent mitogen-activated protein kinase (MAPK) cascade that leads to chitin-induced immunity. Phosphorylates and activates MAPKKK5 when phosphorylated by CERK1 after elicitation by chitin. The polypeptide is Serine/threonine-protein kinase PBL27 (Arabidopsis thaliana (Mouse-ear cress)).